Consider the following 160-residue polypeptide: 2-C-methyl-D-erythritol 2,4-cyclodiphosphate synthase (160 aa).

A divalent metal cation-binding residues include aspartate 11 and histidine 13. Residues 11 to 13 and 37 to 38 each bind 4-CDP-2-C-methyl-D-erythritol 2-phosphate; these read DVH and HS. Histidine 45 provides a ligand contact to a divalent metal cation. Residues 59–61, 64–68, 103–109, 135–138, phenylalanine 142, and arginine 145 contribute to the 4-CDP-2-C-methyl-D-erythritol 2-phosphate site; these read DIG, FPDTD, AQAPKMA, and TTTE.

Belongs to the IspF family. In terms of assembly, homotrimer. The cofactor is a divalent metal cation.

The enzyme catalyses 4-CDP-2-C-methyl-D-erythritol 2-phosphate = 2-C-methyl-D-erythritol 2,4-cyclic diphosphate + CMP. It participates in isoprenoid biosynthesis; isopentenyl diphosphate biosynthesis via DXP pathway; isopentenyl diphosphate from 1-deoxy-D-xylulose 5-phosphate: step 4/6. Involved in the biosynthesis of isopentenyl diphosphate (IPP) and dimethylallyl diphosphate (DMAPP), two major building blocks of isoprenoid compounds. Catalyzes the conversion of 4-diphosphocytidyl-2-C-methyl-D-erythritol 2-phosphate (CDP-ME2P) to 2-C-methyl-D-erythritol 2,4-cyclodiphosphate (ME-CPP) with a corresponding release of cytidine 5-monophosphate (CMP). The protein is 2-C-methyl-D-erythritol 2,4-cyclodiphosphate synthase of Thioalkalivibrio sulfidiphilus (strain HL-EbGR7).